The chain runs to 418 residues: Tyrosine--tRNA ligase (418 aa).

The short motif at 42–51 (PTAPDLHLGH) is the 'HIGH' region element. Residues 226-230 (KMSKS) carry the 'KMSKS' region motif. Lysine 229 serves as a coordination point for ATP. The S4 RNA-binding domain occupies 339–400 (VRLVALLTKS…GKRNFAKVRL (62 aa)).

The protein belongs to the class-I aminoacyl-tRNA synthetase family. TyrS type 2 subfamily. As to quaternary structure, homodimer.

Its subcellular location is the cytoplasm. It carries out the reaction tRNA(Tyr) + L-tyrosine + ATP = L-tyrosyl-tRNA(Tyr) + AMP + diphosphate + H(+). Catalyzes the attachment of tyrosine to tRNA(Tyr) in a two-step reaction: tyrosine is first activated by ATP to form Tyr-AMP and then transferred to the acceptor end of tRNA(Tyr). This Xylella fastidiosa (strain 9a5c) protein is Tyrosine--tRNA ligase.